A 332-amino-acid polypeptide reads, in one-letter code: Thiamine-binding periplasmic protein (332 aa).

Residues 1-20 form the signal peptide; the sequence is MKLLKLTLISTALFSTAALA. Residues Trp202 and 220–223 contribute to the thiamine site; that span reads YSTS.

It belongs to the bacterial solute-binding protein 1 family. In terms of assembly, the complex is composed of two ATP-binding proteins (ThiQ), two transmembrane proteins (ThiP) and a solute-binding protein (ThiB).

Its subcellular location is the periplasm. Functionally, part of the ABC transporter complex ThiBPQ involved in thiamine import. This is Thiamine-binding periplasmic protein (thiB) from Haemophilus influenzae (strain ATCC 51907 / DSM 11121 / KW20 / Rd).